Here is a 119-residue protein sequence, read N- to C-terminus: Flagellar transcriptional regulator FlhD (119 aa).

This sequence belongs to the FlhD family. Homodimer; disulfide-linked. Forms a heterohexamer composed of two FlhC and four FlhD subunits. Each FlhC binds a FlhD dimer, forming a heterotrimer, and a hexamer assembles by dimerization of two heterotrimers.

It is found in the cytoplasm. Its function is as follows. Functions in complex with FlhC as a master transcriptional regulator that regulates transcription of several flagellar and non-flagellar operons by binding to their promoter region. Activates expression of class 2 flagellar genes, including fliA, which is a flagellum-specific sigma factor that turns on the class 3 genes. Also regulates genes whose products function in a variety of physiological pathways. The chain is Flagellar transcriptional regulator FlhD from Shigella dysenteriae serotype 1 (strain Sd197).